Consider the following 391-residue polypeptide: Outer membrane protein 41 (391 aa).

A signal peptide spans 1–20 (MKVKYLMLTLVGAIALNASA). Gln-21 is subject to Pyrrolidone carboxylic acid. One can recognise an OmpA-like domain in the interval 282-391 (TKTENILTEK…WNRVVIVRSK (110 aa)).

This sequence belongs to the outer membrane OOP (TC 1.B.6) superfamily. In terms of assembly, disulfide-linked heterodimer with Omp40.

The protein localises to the cell outer membrane. In terms of biological role, may have porin activity and function in peptidoglycan binding. This is Outer membrane protein 41 from Porphyromonas gingivalis (strain ATCC BAA-308 / W83).